Reading from the N-terminus, the 272-residue chain is Prohibitin 1 (272 aa).

N-acetylalanine is present on alanine 2. Residue threonine 91 is modified to Phosphothreonine. N6-acetyllysine occurs at positions 128 and 186. The stretch at 177-211 forms a coiled coil; it reads KEFTEAVEAKQVAQQEAERARFVVEKAEQQKKAAI. Lysine 202 carries the post-translational modification N6-acetyllysine; alternate. The residue at position 202 (lysine 202) is an N6-succinyllysine; alternate. Residue tyrosine 249 is modified to Phosphotyrosine.

The protein belongs to the prohibitin family. Interacts with PHB2. Interacts with STOML2. Interacts with CD86 (via cytoplasmic domain); the interactions increases after priming with CD40. As to quaternary structure, (Microbial infection) Interacts with human enterovirus 71/EV-71 capsid protein VP0, protein 3CD and protease 3C. In terms of tissue distribution, widely expressed in different tissues.

The protein localises to the mitochondrion inner membrane. The protein resides in the nucleus. It localises to the cell membrane. It is found in the cytoplasm. With respect to regulation, target of the anti-cancer drug Rocaglamide (Roc-A). Its function is as follows. Protein with pleiotropic attributes mediated in a cell-compartment- and tissue-specific manner, which include the plasma membrane-associated cell signaling functions, mitochondrial chaperone, and transcriptional co-regulator of transcription factors in the nucleus. Plays a role in adipose tissue and glucose homeostasis in a sex-specific manner. Contributes to pulmonary vascular remodeling by accelerating proliferation of pulmonary arterial smooth muscle cells. In the mitochondria, together with PHB2, forms large ring complexes (prohibitin complexes) in the inner mitochondrial membrane (IMM) and functions as a chaperone protein that stabilizes mitochondrial respiratory enzymes and maintains mitochondrial integrity in the IMM, which is required for mitochondrial morphogenesis, neuronal survival, and normal lifespan. The prohibitin complex, with DNAJC19, regulates cardiolipin remodeling and the protein turnover of OMA1 in a cardiolipin-binding manner. Regulates mitochondrial respiration activity playing a role in cellular aging. The prohibitin complex plays a role of mitophagy receptor involved in targeting mitochondria for autophagic degradation. Involved in mitochondrial-mediated antiviral innate immunity, activates RIG-I-mediated signal transduction and production of IFNB1 and pro-inflammatory cytokine IL6. Functionally, in the nucleus, acts as a transcription coregulator, enhances promoter binding by TP53, a transcription factor it activates, but reduces the promoter binding by E2F1, a transcription factor it represses. Interacts with STAT3 to affect IL17 secretion in T-helper Th17 cells. In terms of biological role, in the plasma membrane, cooperates with CD86 to mediate CD86-signaling in B lymphocytes that regulates the level of IgG1 produced through the activation of distal signaling intermediates. Upon CD40 engagement, required to activate NF-kappa-B signaling pathway via phospholipase C and protein kinase C activation. Its function is as follows. (Microbial infection) In neuronal cells, cell surface-expressed PHB1 is involved in human enterovirus 71/EV-71 entry into neuronal cells specifically, while membrane-bound mitochondrial PHB1 associates with the virus replication complex and facilitates viral replication. May serve as a receptor for EV71. The chain is Prohibitin 1 (Phb1) from Mus musculus (Mouse).